The primary structure comprises 106 residues: NADH-quinone oxidoreductase subunit K (106 aa).

Helical transmembrane passes span isoleucine 10 to valine 30, valine 35 to phenylalanine 55, and valine 67 to isoleucine 87.

The protein belongs to the complex I subunit 4L family. NDH-1 is composed of 14 different subunits. Subunits NuoA, H, J, K, L, M, N constitute the membrane sector of the complex.

It is found in the cell inner membrane. It carries out the reaction a quinone + NADH + 5 H(+)(in) = a quinol + NAD(+) + 4 H(+)(out). Its function is as follows. NDH-1 shuttles electrons from NADH, via FMN and iron-sulfur (Fe-S) centers, to quinones in the respiratory chain. The immediate electron acceptor for the enzyme in this species is believed to be ubiquinone. Couples the redox reaction to proton translocation (for every two electrons transferred, four hydrogen ions are translocated across the cytoplasmic membrane), and thus conserves the redox energy in a proton gradient. The polypeptide is NADH-quinone oxidoreductase subunit K (Leptospira interrogans serogroup Icterohaemorrhagiae serovar copenhageni (strain Fiocruz L1-130)).